We begin with the raw amino-acid sequence, 202 residues long: Nucleoside triphosphate pyrophosphatase (202 aa).

The Proton acceptor role is filled by Asp-79.

It belongs to the Maf family. The cofactor is a divalent metal cation.

The protein localises to the cytoplasm. It carries out the reaction a ribonucleoside 5'-triphosphate + H2O = a ribonucleoside 5'-phosphate + diphosphate + H(+). The catalysed reaction is a 2'-deoxyribonucleoside 5'-triphosphate + H2O = a 2'-deoxyribonucleoside 5'-phosphate + diphosphate + H(+). Its function is as follows. Nucleoside triphosphate pyrophosphatase. May have a dual role in cell division arrest and in preventing the incorporation of modified nucleotides into cellular nucleic acids. This chain is Nucleoside triphosphate pyrophosphatase, found in Rhodopseudomonas palustris (strain ATCC BAA-98 / CGA009).